We begin with the raw amino-acid sequence, 261 residues long: tRNA pseudouridine synthase A (261 aa).

The Nucleophile role is filled by Asp-55. Tyr-114 is a binding site for substrate.

Belongs to the tRNA pseudouridine synthase TruA family. In terms of assembly, homodimer.

The enzyme catalyses uridine(38/39/40) in tRNA = pseudouridine(38/39/40) in tRNA. Its function is as follows. Formation of pseudouridine at positions 38, 39 and 40 in the anticodon stem and loop of transfer RNAs. The sequence is that of tRNA pseudouridine synthase A from Paracoccus denitrificans (strain Pd 1222).